The following is a 407-amino-acid chain: MDNVLPVDSDLFPNISTNTSEPNQFVQPAWQIVLWAAAYTVIVVTSVVGNVVVMWIILAHKRMRTVTNYFLVNLAFAEASMAAFNTVVNFTYAVHNEWYYGLFYCKFHNFFPIAAVFASIYSMTAVAFDRYMAIIHPLQPRLSATATKVVICVIWVLALLLAFPQGYYSTTETMPGRVVCMIEWPSHPDKIYEKVYHICVTVLIYFLPLLVIGYAYTVVGITLWASEIPGDSSDRYHEQVSAKRKVVKMMIVVVCTFAICWLPFHIFFLLPYINPDLYLKKFIQQVYLAIMWLAMSSTMYNPIIYCCLNDRFRLGFKHAFRCCPFISAADYEGLEMKSTRYFQTQGSVYKVSRLETTISTVVGAHEEDPEEGPKATPSSLDLTSNGSSRSNSKTVTESSSFYSNMLS.

Topologically, residues 1–31 are extracellular; it reads MDNVLPVDSDLFPNISTNTSEPNQFVQPAWQ. Asparagine 14 and asparagine 18 each carry an N-linked (GlcNAc...) asparagine glycan. Residues 32-54 traverse the membrane as a helical segment; that stretch reads IVLWAAAYTVIVVTSVVGNVVVM. Over 55-64 the chain is Cytoplasmic; the sequence is WIILAHKRMR. Residues 65 to 86 traverse the membrane as a helical segment; it reads TVTNYFLVNLAFAEASMAAFNT. At 87-106 the chain is on the extracellular side; it reads VVNFTYAVHNEWYYGLFYCK. A disulfide bridge connects residues cysteine 105 and cysteine 180. Residues 107-128 form a helical membrane-spanning segment; it reads FHNFFPIAAVFASIYSMTAVAF. Residues 129–148 lie on the Cytoplasmic side of the membrane; the sequence is DRYMAIIHPLQPRLSATATK. Residues 149–169 traverse the membrane as a helical segment; it reads VVICVIWVLALLLAFPQGYYS. The Extracellular segment spans residues 170 to 194; it reads TTETMPGRVVCMIEWPSHPDKIYEK. The helical transmembrane segment at 195–219 threads the bilayer; it reads VYHICVTVLIYFLPLLVIGYAYTVV. Residues 220–248 lie on the Cytoplasmic side of the membrane; that stretch reads GITLWASEIPGDSSDRYHEQVSAKRKVVK. A helical membrane pass occupies residues 249 to 270; the sequence is MMIVVVCTFAICWLPFHIFFLL. Residues 271 to 283 are Extracellular-facing; the sequence is PYINPDLYLKKFI. A helical transmembrane segment spans residues 284–308; the sequence is QQVYLAIMWLAMSSTMYNPIIYCCL. Over 309-407 the chain is Cytoplasmic; the sequence is NDRFRLGFKH…SSSFYSNMLS (99 aa). Cysteine 322 carries the S-palmitoyl cysteine lipid modification. The interval 363 to 407 is disordered; the sequence is GAHEEDPEEGPKATPSSLDLTSNGSSRSNSKTVTESSSFYSNMLS. Polar residues predominate over residues 376–407; that stretch reads TPSSLDLTSNGSSRSNSKTVTESSSFYSNMLS.

It belongs to the G-protein coupled receptor 1 family. In terms of assembly, interacts with ARRB1.

It localises to the cell membrane. Its function is as follows. This is a receptor for the tachykinin neuropeptide substance P. It is probably associated with G proteins that activate a phosphatidylinositol-calcium second messenger system. The rank order of affinity of this receptor to tachykinins is: substance P &gt; substance K &gt; neuromedin-K. The protein is Substance-P receptor (TACR1) of Cavia porcellus (Guinea pig).